A 320-amino-acid chain; its full sequence is Pyrroline-5-carboxylate reductase 2 (320 aa).

Ser2 is subject to N-acetylserine. NADP(+) contacts are provided by residues 6-11 (IGAGQL) and Ser34. The NADPH site is built by Ala8, Gln10, Leu11, Ser34, Glu36, Asn56, Val70, Lys71, and Ala97. Residues Asn56, 69–72 (AVKP), and 95–97 (CAA) contribute to the NADP(+) site. L-proline is bound at residue Glu164. An NADPH-binding site is contributed by Asn230. Ala237 and Thr238 together coordinate L-proline. Residues 293 to 320 (ESPTVSTLAPPSSGKLLTRNPAQGSKRE) are disordered. Ser304 is subject to Phosphoserine.

The protein belongs to the pyrroline-5-carboxylate reductase family. In terms of assembly, homodecamer; composed of 5 homodimers. Interacts with LTO1.

It localises to the cytoplasm. Its subcellular location is the mitochondrion. It catalyses the reaction L-proline + NADP(+) = (S)-1-pyrroline-5-carboxylate + NADPH + 2 H(+). The enzyme catalyses L-proline + NAD(+) = (S)-1-pyrroline-5-carboxylate + NADH + 2 H(+). It participates in amino-acid biosynthesis; L-proline biosynthesis; L-proline from L-glutamate 5-semialdehyde: step 1/1. Functionally, oxidoreductase that catalyzes the last step in proline biosynthesis, which corresponds to the reduction of pyrroline-5-carboxylate to L-proline using NAD(P)H. At physiologic concentrations, has higher specific activity in the presence of NADH. Involved in cellular response to oxidative stress. In some cell types, such as erythrocytes, its primary function may be the generation of NADP(+). This Rattus norvegicus (Rat) protein is Pyrroline-5-carboxylate reductase 2.